A 177-amino-acid chain; its full sequence is Phosphatidylglycerol/phosphatidylinositol transfer protein (177 aa).

The N-terminal stretch at 1–17 (MRLSAAVIALLSTSAAA) is a signal peptide. Positions 18–30 (FSVYRENSVSAND) are excised as a propeptide.

Belongs to the NPC2 family. In terms of assembly, monomer.

Functionally, catalyzes the intermembrane transfer of phosphatidylglycerol and phosphatidylinositol. This is Phosphatidylglycerol/phosphatidylinositol transfer protein (npc-2) from Neurospora crassa (strain ATCC 24698 / 74-OR23-1A / CBS 708.71 / DSM 1257 / FGSC 987).